Reading from the N-terminus, the 579-residue chain is Probable serine/threonine-protein kinase kinY (579 aa).

Positions 1 to 24 are disordered; the sequence is MINGEQTMVEDELPDQGKPMSDES. The 278-residue stretch at 32–309 folds into the Protein kinase domain; sequence LKVGESIGSG…HVLKQLTSLF (278 aa). ATP is bound by residues 38–46 and lysine 59; that span reads IGSGAYGIV. Aspartate 167 acts as the Proton acceptor in catalysis.

The protein belongs to the protein kinase superfamily. TKL Ser/Thr protein kinase family.

It catalyses the reaction L-seryl-[protein] + ATP = O-phospho-L-seryl-[protein] + ADP + H(+). It carries out the reaction L-threonyl-[protein] + ATP = O-phospho-L-threonyl-[protein] + ADP + H(+). This chain is Probable serine/threonine-protein kinase kinY (kinY), found in Dictyostelium discoideum (Social amoeba).